The primary structure comprises 464 residues: Soluble pyridine nucleotide transhydrogenase (464 aa).

Position 35–44 (35–44) interacts with FAD; sequence DSRRQVGGNC.

This sequence belongs to the class-I pyridine nucleotide-disulfide oxidoreductase family. Requires FAD as cofactor.

It is found in the cytoplasm. The enzyme catalyses NAD(+) + NADPH = NADH + NADP(+). In terms of biological role, conversion of NADPH, generated by peripheral catabolic pathways, to NADH, which can enter the respiratory chain for energy generation. The sequence is that of Soluble pyridine nucleotide transhydrogenase from Pseudomonas syringae pv. syringae (strain B728a).